We begin with the raw amino-acid sequence, 775 residues long: MAEQLLPQALYLSNMRKAVKIRERTPEDIFKPTNGIIYHFKTMHRYTLEMFRTCQFCPQFREIIHKALIDRSVQASLESQKKLNWCREVRKLVALKTNGDGNCLMHAACQYMWGVQDTDLVLRKALCSTLKETDTRNFKFRWQLESLKSQEFVETGLCYDTRNWNDEWDNLVKMASADTPAARSGLQYNSLEEIHIFVLSNILRRPIIVISDKMLRSLESGSNFAPLKVGGIYLPLHWPAQECYRYPIVLGYDSQHFVPLVTLKDSGPELRAVPLVNRDRGRFEDLKVHFLTDPENEMKEKLLKEYLIVMEIPVQGWDHGTTHLINAAKLDEANLPKEINLVDDYFELVQHEYKKWQENSDQARRAAHAQNPLEPSTPQLSLMDIKCETPNCPFFMSVNTQPLCHECSERRQKNQSKLPKLNSKLGPEGLPGVGLGSSNWSPEETAGGPHSAPPTAPSLFLFSETTAMKCRSPGCPFTLNVQHNGFCERCHARQINASHTADPGKCQACLQDVTRTFNGICSTCFKRTTAEPSSSLTSSIPASCHQRSKSDPSQLIQSLTPHSCHRTGNVSPSGCLSQAARTPGDRAGTSKCRKAGCMYFGTPENKGFCTLCFIEYRENKQSVTASEKAGSPAPRFQNNVPCLGRECGTLGSTMFEGYCQKCFIEAQNQRFHEARRTEEQLRSSQHRDMPRTTQVASRLKCARASCKNILACRSEELCMECQHLSQRVGSVAHRGEPTPEEPPKQRCRAPACDHFGNAKCNGYCNECYQFKQMYG.

N-acetylalanine is present on A2. Residues 58-300 (PQFREIIHKA…LTDPENEMKE (243 aa)) form a TRAF-binding region. The 172-residue stretch at 92–263 (LVALKTNGDG…SQHFVPLVTL (172 aa)) folds into the OTU domain. D100 is an active-site residue. The active-site Nucleophile is C103. Interaction with ubiquitin stretches follow at residues 157–159 (LCY), 190–192 (SLE), and 224–227 (FAPL). The Proton acceptor role is filled by H256. An interaction with TNIP1 region spans residues 369 to 775 (AQNPLEPSTP…ECYQFKQMYG (407 aa)). The segment at 381-416 (SLMDIKCETPNCPFFMSVNTQPLCHECSERRQKNQS) adopts an A20-type 1 zinc-finger fold. Positions 386-445 (KCETPNCPFFMSVNTQPLCHECSERRQKNQSKLPKLNSKLGPEGLPGVGLGSSNWSPEET) are interaction with RIPK1. C387, C392, C404, and C407 together coordinate Zn(2+). Residues 415-455 (QSKLPKLNSKLGPEGLPGVGLGSSNWSPEETAGGPHSAPPT) are disordered. Residue S451 is modified to Phosphoserine. 2 consecutive A20-type zinc fingers follow at residues 464 to 499 (ETTAMKCRSPGCPFTLNVQHNGFCERCHARQINASH) and 500 to 533 (TADPGKCQACLQDVTRTFNGICSTCFKRTTAEPS). Zn(2+)-binding residues include C470, C475, C487, C490, C506, C509, C521, and C524. Over residues 567–580 (TGNVSPSGCLSQAA) the composition is skewed to polar residues. Residues 567-590 (TGNVSPSGCLSQAARTPGDRAGTS) form a disordered region. 4 A20-type zinc fingers span residues 586 to 621 (RAGTSKCRKAGCMYFGTPENKGFCTLCFIEYRENKQ), 636 to 671 (FQNNVPCLGRECGTLGSTMFEGYCQKCFIEAQNQRF), 695 to 730 (VASRLKCARASCKNILACRSEELCMECQHLSQRVGS), and 741 to 775 (EPPKQRCRAPACDHFGNAKCNGYCNECYQFKQMYG). Residues 590–640 (SKCRKAGCMYFGTPENKGFCTLCFIEYRENKQSVTASEKAGSPAPRFQNNV) are required for proteasomal degradation of UBE2N and UBE2D3, TRAF6 deubiquitination, and TAX1BP1 interaction with UBE2N. Residues 591–775 (KCRKAGCMYF…ECYQFKQMYG (185 aa)) form a sufficient for inhibitory activity of TNF-induced NF-kappa-B activity region. Zn(2+) contacts are provided by C592, C597, C609, C612, C642, C647, C659, C662, C701, C706, C718, C721, C747, C752, C764, and C767. The interval 682–775 (RSSQHRDMPR…ECYQFKQMYG (94 aa)) is required for lysosomal localization and for TRAF2 lysosomal degradation.

The protein belongs to the peptidase C64 family. In terms of assembly, homodimer. Interacts with TNIP1, TAX1BP1 and TRAF2. Interacts with RNF11, ITCH and TAX1BP1 only after TNF stimulation; these interaction are transient and they are lost after 1 hour of stimulation with TNF. Interacts with YWHAZ and YWHAH. Interacts with IKBKG; the interaction is induced by TNF stimulation and by polyubiquitin. Interacts with RIPK1. Interacts with UBE2N; the interaction requires TAX1BP1. Interacts with TRAF6. As to expression, found in most tissues during development. Strikingly high levels are found in lymphoid organs, including the thymus, spleen, and gut-associated lymphoid tissue. Constitutively expressed in immature and mature thymocyte subpopulations as well as in resting peripheral T-cells; activation of these leads to down-regulation.

It localises to the cytoplasm. The protein resides in the nucleus. The protein localises to the lysosome. It catalyses the reaction Thiol-dependent hydrolysis of ester, thioester, amide, peptide and isopeptide bonds formed by the C-terminal Gly of ubiquitin (a 76-residue protein attached to proteins as an intracellular targeting signal).. In terms of biological role, ubiquitin-editing enzyme that contains both ubiquitin ligase and deubiquitinase activities. Involved in immune and inflammatory responses signaled by cytokines, such as TNF-alpha and IL-1 beta, or pathogens via Toll-like receptors (TLRs) through terminating NF-kappa-B activity. Essential component of a ubiquitin-editing protein complex, comprising also RNF11, ITCH and TAX1BP1, that ensures the transient nature of inflammatory signaling pathways. In cooperation with TAX1BP1 promotes disassembly of E2-E3 ubiquitin protein ligase complexes in IL-1R and TNFR-1 pathways; affected are at least E3 ligases TRAF6, TRAF2 and BIRC2, and E2 ubiquitin-conjugating enzymes UBE2N and UBE2D3. In cooperation with TAX1BP1 promotes ubiquitination of UBE2N and proteasomal degradation of UBE2N and UBE2D3. Upon TNF stimulation, deubiquitinates 'Lys-63'-polyubiquitin chains on RIPK1 and catalyzes the formation of 'Lys-48'-polyubiquitin chains. This leads to RIPK1 proteasomal degradation and consequently termination of the TNF- or LPS-mediated activation of NF-kappa-B. Deubiquitinates TRAF6 probably acting on 'Lys-63'-linked polyubiquitin. Upon T-cell receptor (TCR)-mediated T-cell activation, deubiquitinates 'Lys-63'-polyubiquitin chains on MALT1 thereby mediating disassociation of the CBM (CARD11:BCL10:MALT1) and IKK complexes and preventing sustained IKK activation. Deubiquitinates NEMO/IKBKG; the function is facilitated by TNIP1 and leads to inhibition of NF-kappa-B activation. Upon stimulation by bacterial peptidoglycans, probably deubiquitinates RIPK2. Can also inhibit I-kappa-B-kinase (IKK) through a non-catalytic mechanism which involves polyubiquitin; polyubiquitin promotes association with IKBKG and prevents IKK MAP3K7-mediated phosphorylation. Targets TRAF2 for lysosomal degradation. In vitro able to deubiquitinate 'Lys-11'-, 'Lys-48'- and 'Lys-63' polyubiquitin chains. Inhibitor of programmed cell death. Has a role in the function of the lymphoid system. Required for LPS-induced production of pro-inflammatory cytokines and IFN beta in LPS-tolerized macrophages. This chain is Tumor necrosis factor alpha-induced protein 3 (Tnfaip3), found in Mus musculus (Mouse).